Here is a 69-residue protein sequence, read N- to C-terminus: Small ribosomal subunit protein bS21 (69 aa).

The protein belongs to the bacterial ribosomal protein bS21 family.

The polypeptide is Small ribosomal subunit protein bS21 (rpsU) (Treponema pallidum (strain Nichols)).